Consider the following 80-residue polypeptide: uncharacterized protein (80 aa).

This is an uncharacterized protein from Homo sapiens (Human).